We begin with the raw amino-acid sequence, 494 residues long: Glutamyl-tRNA(Gln) amidotransferase subunit A (494 aa).

Catalysis depends on charge relay system residues K79 and S159. S183 functions as the Acyl-ester intermediate in the catalytic mechanism.

The protein belongs to the amidase family. GatA subfamily. Heterotrimer of A, B and C subunits.

The enzyme catalyses L-glutamyl-tRNA(Gln) + L-glutamine + ATP + H2O = L-glutaminyl-tRNA(Gln) + L-glutamate + ADP + phosphate + H(+). In terms of biological role, allows the formation of correctly charged Gln-tRNA(Gln) through the transamidation of misacylated Glu-tRNA(Gln) in organisms which lack glutaminyl-tRNA synthetase. The reaction takes place in the presence of glutamine and ATP through an activated gamma-phospho-Glu-tRNA(Gln). In Bartonella henselae (strain ATCC 49882 / DSM 28221 / CCUG 30454 / Houston 1) (Rochalimaea henselae), this protein is Glutamyl-tRNA(Gln) amidotransferase subunit A.